We begin with the raw amino-acid sequence, 294 residues long: Filamin-B (294 aa).

Filamin repeat units lie at residues 1 to 67 and 71 to 163; these read GTRL…KVRV and GQAG…KAKV. Phosphoserine is present on residues Ser-61 and Ser-157. Residue Lys-160 forms a Glycyl lysine isopeptide (Lys-Gly) (interchain with G-Cter in ISG15) linkage. The hinge 2 stretch occupies residues 164–198; it reads TGQRLVGPGSTNETSSILVESVTRSSTETCYSAIP. The segment at 164 to 294 is self-association site, tail; that stretch reads TGQRLVGPGS…PGSPFHVTVP (131 aa). Phosphoserine is present on residues Ser-173 and Ser-184. Residues 199–293 form a Filamin 24 repeat; the sequence is KASSDASKVT…IPGSPFHVTV (95 aa). An N6-succinyllysine mark is found at Lys-210 and Lys-216. At Lys-268 the chain carries N6-acetyllysine.

It belongs to the filamin family. As to quaternary structure, homodimer. Interacts with FLNA, FLNC, INPPL1, ITGB1A, ITGB1D, ITGB3, ITGB6, MYOT, MYOZ1, PSEN1 and PSEN2. Interacts with MICALL2. Interacts with RFLNA and RFLNB. Interacts with HTLV-I viral p13 protein. Interacts with ASB2; the interaction targets FLNB for proteasomal degradation. ISGylation prevents ability to interact with the upstream activators of the JNK cascade and inhibits IFNA-induced JNK signaling. In terms of processing, ubiquitination by a SCF-like complex containing ASB2 leads to proteasomal degradation which promotes muscle differentiation.

It is found in the cytoplasm. The protein localises to the cell cortex. The protein resides in the cytoskeleton. Its subcellular location is the myofibril. It localises to the sarcomere. It is found in the z line. Connects cell membrane constituents to the actin cytoskeleton. May promote orthogonal branching of actin filaments and links actin filaments to membrane glycoproteins. Anchors various transmembrane proteins to the actin cytoskeleton. This Oryctolagus cuniculus (Rabbit) protein is Filamin-B (FLNB).